The sequence spans 298 residues: MIIRVGSRASRLALIQAQAVVQKINDLLGLNAIIIPIKTTGDLIQNKNLYDIGGKGLFLKEIEYALLNNTIDIAVHSLKDVPAYLPDGLQLAAVLERGDVGDMLVSKIANKITDLPLGAIVGTSSVRRRIQLLMLRPDLNIVLFRGNVDTRWNKIINNEVDATVLAAAGLQRLNYDTSRFCNIIPQSEMLPAIGQGAIAIEARKDDKLIMPLCAKINHQLTWQLIQVERGYLKTLNADCNVPIGGIASYIGNNSFEAKFMLGDYNMRYFFYSEVRGKLQHGYDIGVEAAKNFQKRLFI.

C239 bears the S-(dipyrrolylmethanemethyl)cysteine mark.

This sequence belongs to the HMBS family. Monomer. Requires dipyrromethane as cofactor.

It catalyses the reaction 4 porphobilinogen + H2O = hydroxymethylbilane + 4 NH4(+). The protein operates within porphyrin-containing compound metabolism; protoporphyrin-IX biosynthesis; coproporphyrinogen-III from 5-aminolevulinate: step 2/4. Functionally, tetrapolymerization of the monopyrrole PBG into the hydroxymethylbilane pre-uroporphyrinogen in several discrete steps. This is Porphobilinogen deaminase from Orientia tsutsugamushi (strain Boryong) (Rickettsia tsutsugamushi).